We begin with the raw amino-acid sequence, 206 residues long: Ribosomal RNA large subunit methyltransferase E (206 aa).

Positions 60, 62, 80, 96, and 121 each coordinate S-adenosyl-L-methionine. Catalysis depends on Lys161, which acts as the Proton acceptor.

This sequence belongs to the class I-like SAM-binding methyltransferase superfamily. RNA methyltransferase RlmE family.

The protein resides in the cytoplasm. The enzyme catalyses uridine(2552) in 23S rRNA + S-adenosyl-L-methionine = 2'-O-methyluridine(2552) in 23S rRNA + S-adenosyl-L-homocysteine + H(+). Its function is as follows. Specifically methylates the uridine in position 2552 of 23S rRNA at the 2'-O position of the ribose in the fully assembled 50S ribosomal subunit. The chain is Ribosomal RNA large subunit methyltransferase E from Hydrogenovibrio crunogenus (strain DSM 25203 / XCL-2) (Thiomicrospira crunogena).